Reading from the N-terminus, the 144-residue chain is Large ribosomal subunit protein uL15 (144 aa).

Positions 1 to 51 are disordered; it reads MQLNTLSPAQGEKKSRKRVGRGIGSGIGKTCGSGHKGQKSRSGGFNKIGFE. The segment covering 21-35 has biased composition (gly residues); it reads RGIGSGIGKTCGSGH.

The protein belongs to the universal ribosomal protein uL15 family. Part of the 50S ribosomal subunit.

Functionally, binds to the 23S rRNA. The sequence is that of Large ribosomal subunit protein uL15 from Vesicomyosocius okutanii subsp. Calyptogena okutanii (strain HA).